A 553-amino-acid polypeptide reads, in one-letter code: Tether containing UBX domain for GLUT4 (553 aa).

Ala-2 carries the N-acetylalanine modification. Positions 182 to 202 are enriched in low complexity; sequence PGSLGSSASAGQAAASAPLPL. The segment at 182–324 is disordered; that stretch reads PGSLGSSASA…REPVDREPVV (143 aa). Phosphoserine is present on Ser-184. Residues 206–217 show a composition bias toward basic and acidic residues; it reads ELSRGDLSRPED. Residues 260–280 show a composition bias toward low complexity; the sequence is RPLTSSSAKLPKSLSSPGGPS. At Ser-275 the chain carries Phosphoserine. Over residues 296–324 the composition is skewed to basic and acidic residues; it reads EQERERDPQQEQERERPVDREPVDREPVV. Residues 317 to 380 form an interaction with GLUT4 region; it reads PVDREPVVCH…LVTKAFREAQ (64 aa). The 77-residue stretch at 386-462 folds into the UBX domain; that stretch reads ERYPKVALRV…NLFPAALVHL (77 aa). The disordered stretch occupies residues 499 to 536; that stretch reads GSPSPLPAPDPAPKSEPAAEEGALVPPEPIPGTAQPVK. Ser-500 and Ser-502 each carry phosphoserine. Positions 502–512 are enriched in pro residues; that stretch reads SPLPAPDPAPK.

As to quaternary structure, interacts with GLUT4. Interacts with VCPKMT. Interacts with VCP. As to expression, ubiquitous. Highly expressed in testis, heart, skeletal muscle and pancreas.

The protein localises to the endomembrane system. Its subcellular location is the endoplasmic reticulum-Golgi intermediate compartment membrane. It localises to the cytoplasm. It is found in the nucleus. Its function is as follows. Tethering protein that sequesters GLUT4-containing vesicles in the cytoplasm in the absence of insulin. Modulates the amount of GLUT4 that is available at the cell surface. Enhances VCP methylation catalyzed by VCPKMT. In Homo sapiens (Human), this protein is Tether containing UBX domain for GLUT4 (ASPSCR1).